Consider the following 202-residue polypeptide: IMP cyclohydrolase (202 aa).

Belongs to the archaeal IMP cyclohydrolase family.

It catalyses the reaction IMP + H2O = 5-formamido-1-(5-phospho-D-ribosyl)imidazole-4-carboxamide. Its pathway is purine metabolism; IMP biosynthesis via de novo pathway; IMP from 5-formamido-1-(5-phospho-D-ribosyl)imidazole-4-carboxamide: step 1/1. Catalyzes the cyclization of 5-formylamidoimidazole-4-carboxamide ribonucleotide to IMP. This Methanothermobacter thermautotrophicus (strain ATCC 29096 / DSM 1053 / JCM 10044 / NBRC 100330 / Delta H) (Methanobacterium thermoautotrophicum) protein is IMP cyclohydrolase.